We begin with the raw amino-acid sequence, 114 residues long: Iron-sulfur cluster insertion protein ErpA (114 aa).

Residues cysteine 42, cysteine 106, and cysteine 108 each contribute to the iron-sulfur cluster site.

The protein belongs to the HesB/IscA family. Homodimer. Iron-sulfur cluster serves as cofactor.

Its function is as follows. Required for insertion of 4Fe-4S clusters for at least IspG. The sequence is that of Iron-sulfur cluster insertion protein ErpA from Sodalis glossinidius (strain morsitans).